Consider the following 512-residue polypeptide: MSEQTTTPEVDHTLELNNEMTERRSKLAALRAQGNPFPNDFRRDSLSGDLHAEFGDKSAEELVALGKQVKIAGRIMTRRIMGKASFATLQDMAGKIQIYVTRDDLPEGFYNEQFKKWDLGDIVGVEGTLFRTNTGELSVHVSTIRLLTKALRPLPEKHKGLTDQEARCRQRYLDLIANEESRKTFMIRTKVVAGIRKFFNDKRFMEVETPMMQVIPGGASARPFVTHHNALDIDMYLRIAPELYLKRLVVGGFERVYEINRNFRNEGISVRHNPEFTMIEFYMAYADYIDLMDLTEELLRTLAQDILGDTKIRYAKEGEEGLTIDFGQPFQRLTMVDSILKFNPDVTPADLATLESAKAVAKHLHIELMKGWELGHVITAIFEETVEHMLLQPTFITEYPAAVSPLARRNDVNPDVTDRFEFFIGGRELANGFSELNDAEDQAKRFQDQVNQKEAGDDEAMFYDADFVTALEHGLPPTAGQGIGIDRLVMLFTNSHTIRDVILFPALRPQQK.

Residues glutamate 421 and glutamate 428 each coordinate Mg(2+).

This sequence belongs to the class-II aminoacyl-tRNA synthetase family. Homodimer. Requires Mg(2+) as cofactor.

It localises to the cytoplasm. It catalyses the reaction tRNA(Lys) + L-lysine + ATP = L-lysyl-tRNA(Lys) + AMP + diphosphate. This is Lysine--tRNA ligase from Aeromonas salmonicida (strain A449).